The primary structure comprises 250 residues: Kv channel-interacting protein 4 (250 aa).

The interval 2–44 (NVRRVESISAQLEEASSTGGFLYAQNNTKRSIKERLMKLLPCS) is KIS. A phosphoserine mark is found at Ser-17 and Ser-56. The region spanning 61 to 117 (LEMATVRHRPEALELLEAQSKFTKKELQILYRGFKNECPSGVVNEETFKEIYSQFFP) is the EF-hand 1; degenerate domain. 3 EF-hand domains span residues 120-155 (DSTT…LLRG), 156-191 (TVQE…IYDM), and 204-239 (APRQ…DENI). Positions 133, 135, 137, 144, 169, 171, 173, 175, 180, 217, 219, 221, and 228 each coordinate Ca(2+). The tract at residues 237 to 250 (ENIMRSMQLFENVI) is interaction with KCND2.

The protein belongs to the recoverin family. In terms of assembly, component of heteromultimeric potassium channels. Identified in potassium channel complexes containing KCND1, KCND2, KCND3, KCNIP1, KCNIP2, KCNIP3, KCNIP4, DPP6 and DPP10. Interacts with the C-terminus of PSEN2 and probably PSEN1. Interacts with KCND2 and KCND3. As to expression, expressed in brain. Highly expressed by neurons in layers II-IV of cortex and in hippocampus, thalamus and the Purkinje cell layer of the cerebellum.

The protein localises to the cell membrane. Its subcellular location is the cytoplasm. It localises to the peroxisome. Its function is as follows. Regulatory subunit of Kv4/D (Shal)-type voltage-gated rapidly inactivating A-type potassium channels, such as KCND2/Kv4.2 and KCND3/Kv4.3. Modulates channel expression at the cell membrane, gating characteristics, inactivation kinetics and rate of recovery from inactivation in a calcium-dependent and isoform-specific manner. This chain is Kv channel-interacting protein 4 (Kcnip4), found in Mus musculus (Mouse).